The chain runs to 338 residues: Methionine import ATP-binding protein MetN 2 (338 aa).

The ABC transporter domain occupies 2-242 (IEIEKVCVDF…PQHAFTQQLV (241 aa)). 39–46 (GTSGAGKS) is an ATP binding site.

This sequence belongs to the ABC transporter superfamily. Methionine importer (TC 3.A.1.24) family. As to quaternary structure, the complex is composed of two ATP-binding proteins (MetN), two transmembrane proteins (MetI) and a solute-binding protein (MetQ).

The protein resides in the cell inner membrane. The catalysed reaction is L-methionine(out) + ATP + H2O = L-methionine(in) + ADP + phosphate + H(+). The enzyme catalyses D-methionine(out) + ATP + H2O = D-methionine(in) + ADP + phosphate + H(+). In terms of biological role, part of the ABC transporter complex MetNIQ involved in methionine import. Responsible for energy coupling to the transport system. The polypeptide is Methionine import ATP-binding protein MetN 2 (Salmonella choleraesuis (strain SC-B67)).